The chain runs to 212 residues: MNIFRFAGDLSHVFAIIILLLKIWKTRSCAGISGKSQILFAVVYLTRYLDLFTTYVSLYNSVMKVLFLATSGATVYLMYVKFKATYDHNHDSFRIEFLLVPCALLSLVINHEFTVMEVLWTFSIYLESVAILPQLFLVSRTGEAESITSHYLFALGSYRALYLLNWVYRYMVESHYDLIAIFAGVVQTVLYCDFFYLYITKVLKGKKLQLPA.

Topologically, residues 1-2 are lumenal; sequence MN. The helical transmembrane segment at 3–21 threads the bilayer; that stretch reads IFRFAGDLSHVFAIIILLL. Over 22–35 the chain is Cytoplasmic; the sequence is KIWKTRSCAGISGK. The chain crosses the membrane as a helical span at residues 36 to 53; sequence SQILFAVVYLTRYLDLFT. Residues 54–61 lie on the Lumenal side of the membrane; sequence TYVSLYNS. A helical transmembrane segment spans residues 62–80; that stretch reads VMKVLFLATSGATVYLMYV. The Cytoplasmic segment spans residues 81 to 96; the sequence is KFKATYDHNHDSFRIE. Residues 97–110 form a helical membrane-spanning segment; that stretch reads FLLVPCALLSLVIN. At 111 to 117 the chain is on the lumenal side; the sequence is HEFTVME. Residues 118 to 137 form a helical membrane-spanning segment; sequence VLWTFSIYLESVAILPQLFL. Topologically, residues 138–149 are cytoplasmic; it reads VSRTGEAESITS. The chain crosses the membrane as a helical span at residues 150–168; the sequence is HYLFALGSYRALYLLNWVY. Over 169–178 the chain is Lumenal; the sequence is RYMVESHYDL. The chain crosses the membrane as a helical span at residues 179-199; it reads IAIFAGVVQTVLYCDFFYLYI. The Cytoplasmic segment spans residues 200–212; that stretch reads TKVLKGKKLQLPA.

It belongs to the ERD2 family.

It localises to the endoplasmic reticulum membrane. Functionally, required for the retention of luminal endoplasmic reticulum proteins. Determines the specificity of the luminal ER protein retention system. Also required for normal vesicular traffic through the Golgi. The protein is ER lumen protein-retaining receptor (KdelR) of Drosophila melanogaster (Fruit fly).